The sequence spans 391 residues: Na(+)/H(+) antiporter NhaA 2 (391 aa).

The next 11 helical transmembrane spans lie at 25–45 (AGGIVLMAAALAALIVANSPL), 56–76 (VWLGLSVELWINDGLMAIFFL), 98–118 (ALPGFAALGGMLVPALIYIAI), 128–148 (GWAIPAATDIAFALGVLSLLG), 157–177 (VFLAALAILDDLGAVTIIAFF), 180–200 (SGLNLPMLAAAFVTLAVLVAL), 208–228 (LLPYLLLGALLWFFVLQSGVH), 264–284 (VAFAVVPIFGFANAGVSLSGI), 297–317 (VALGLFVGKQIGVFLAAVLAI), 335–355 (GVAILCGIGFTMSLFIGNLAF), and 364–384 (EVKVGVLIGSGLAAVAGIVLL).

Belongs to the NhaA Na(+)/H(+) (TC 2.A.33) antiporter family.

The protein resides in the cell inner membrane. The catalysed reaction is Na(+)(in) + 2 H(+)(out) = Na(+)(out) + 2 H(+)(in). Its function is as follows. Na(+)/H(+) antiporter that extrudes sodium in exchange for external protons. The protein is Na(+)/H(+) antiporter NhaA 2 of Pseudomonas syringae pv. tomato (strain ATCC BAA-871 / DC3000).